We begin with the raw amino-acid sequence, 456 residues long: Putative sodium-coupled neutral amino acid transporter 11 (456 aa).

The interval 1–25 (MRAGPRRQHLLPPQDNRAAVGYQRQ) is disordered. The chain crosses the membrane as a helical span at residues 58–78 (FNVVNSIIGSGIIDFSLILLI). N94 is a glycosylation site (N-linked (GlcNAc...) asparagine). Helical transmembrane passes span 98-118 (GFPG…IAMI), 143-163 (VFIG…LPLS), 171-191 (LGKV…IVMA), 206-226 (AWVF…FAFI), 252-272 (MSIV…YLTF), and 291-313 (VTFG…CFVT). N325 carries an N-linked (GlcNAc...) asparagine glycan. 3 helical membrane passes run 329 to 349 (VFHI…SLLI), 351 to 371 (CLGI…IFII), and 390 to 410 (IMSY…FVMA).

Belongs to the amino acid/polyamine transporter 2 family.

Its subcellular location is the membrane. Putative sodium-dependent amino acid/proton antiporter. This chain is Putative sodium-coupled neutral amino acid transporter 11 (SLC38A11), found in Macaca fascicularis (Crab-eating macaque).